A 613-amino-acid polypeptide reads, in one-letter code: Dihydroxy-acid dehydratase (613 aa).

D81 serves as a coordination point for Mg(2+). C122 contacts [2Fe-2S] cluster. Positions 123 and 124 each coordinate Mg(2+). Position 124 is an N6-carboxylysine (K124). C193 is a binding site for [2Fe-2S] cluster. E489 is a Mg(2+) binding site. S515 (proton acceptor) is an active-site residue.

The protein belongs to the IlvD/Edd family. As to quaternary structure, homodimer. [2Fe-2S] cluster serves as cofactor. Requires Mg(2+) as cofactor.

It catalyses the reaction (2R)-2,3-dihydroxy-3-methylbutanoate = 3-methyl-2-oxobutanoate + H2O. The enzyme catalyses (2R,3R)-2,3-dihydroxy-3-methylpentanoate = (S)-3-methyl-2-oxopentanoate + H2O. It participates in amino-acid biosynthesis; L-isoleucine biosynthesis; L-isoleucine from 2-oxobutanoate: step 3/4. The protein operates within amino-acid biosynthesis; L-valine biosynthesis; L-valine from pyruvate: step 3/4. Functionally, functions in the biosynthesis of branched-chain amino acids. Catalyzes the dehydration of (2R,3R)-2,3-dihydroxy-3-methylpentanoate (2,3-dihydroxy-3-methylvalerate) into 2-oxo-3-methylpentanoate (2-oxo-3-methylvalerate) and of (2R)-2,3-dihydroxy-3-methylbutanoate (2,3-dihydroxyisovalerate) into 2-oxo-3-methylbutanoate (2-oxoisovalerate), the penultimate precursor to L-isoleucine and L-valine, respectively. The sequence is that of Dihydroxy-acid dehydratase from Pseudomonas fluorescens (strain SBW25).